Here is a 434-residue protein sequence, read N- to C-terminus: 23S rRNA (uracil(1939)-C(5))-methyltransferase RlmD (434 aa).

The TRAM domain occupies 10–68 (RVTTRQIITVTVNDLDPFGQGVARHQGKALFVSGVLPQEQAEVVLVEDKKQYARAQVKR). Cys-81, Cys-87, Cys-90, and Cys-162 together coordinate [4Fe-4S] cluster. S-adenosyl-L-methionine contacts are provided by Gln-265, Phe-294, Asn-299, Glu-315, Asn-342, and Asp-363. Cys-389 functions as the Nucleophile in the catalytic mechanism.

The protein belongs to the class I-like SAM-binding methyltransferase superfamily. RNA M5U methyltransferase family. RlmD subfamily.

The catalysed reaction is uridine(1939) in 23S rRNA + S-adenosyl-L-methionine = 5-methyluridine(1939) in 23S rRNA + S-adenosyl-L-homocysteine + H(+). In terms of biological role, catalyzes the formation of 5-methyl-uridine at position 1939 (m5U1939) in 23S rRNA. In Klebsiella pneumoniae (strain 342), this protein is 23S rRNA (uracil(1939)-C(5))-methyltransferase RlmD.